Here is an 862-residue protein sequence, read N- to C-terminus: Rab GTPase-binding effector protein 1 (862 aa).

Position 2 is an N-acetylalanine (Ala2). The stretch at 11–345 forms a coiled coil; the sequence is DVSLQQRVAE…KKTDTEEEVK (335 aa). An N6-acetyllysine modification is found at Lys282. Positions 315 to 374 are disordered; it reads ELKKKDQEEDEQQRVNKRKDNKKTDTEEEVKIPVVCALTQEESSTPLSNEEEHLDSTHGS. Over residues 336–345 the composition is skewed to basic and acidic residues; the sequence is KKTDTEEEVK. Ser374, Ser377, and Ser407 each carry phosphoserine. Thr408 carries the post-translational modification Phosphothreonine. Residue Ser410 is modified to Phosphoserine. Residues 534 to 816 adopt a coiled-coil conformation; that stretch reads DMCSNYEKQL…LQTELDVSEQ (283 aa).

Belongs to the rabaptin family. As to quaternary structure, heterodimer with RABGEF1. The heterodimer binds RAB4A and RAB5A that have been activated by GTP-binding. Interacts with TSC2. Interacts with GGA1 (via GAE domain), GGA2 (via GAE domain) and GGA3 (via GAE domain). Interacts with AP1G1 (via GAE domain). Interacts with AP1G2 (via GAE domain). Interacts with ECPAS. Interacts with KCNH1. Interacts with PKD1 (via C-terminal domain) and GGA1; the interactions recruit PKD1:PKD2 complex to GGA1 and ARL3 at trans-Golgi network. Interacts with KCNH1. In terms of processing, proteolytic cleavage by caspases in apoptotic cells causes loss of endosome fusion activity.

Its subcellular location is the cytoplasm. The protein localises to the early endosome. The protein resides in the recycling endosome. It is found in the cytoplasmic vesicle. Its function is as follows. Rab effector protein acting as linker between gamma-adaptin, RAB4A and RAB5A. Involved in endocytic membrane fusion and membrane trafficking of recycling endosomes. Involved in KCNH1 channels trafficking to and from the cell membrane. Stimulates RABGEF1 mediated nucleotide exchange on RAB5A. Mediates the traffic of PKD1:PKD2 complex from the endoplasmic reticulum through the Golgi to the cilium. The sequence is that of Rab GTPase-binding effector protein 1 (Rabep1) from Mus musculus (Mouse).